We begin with the raw amino-acid sequence, 292 residues long: Elongation factor Ts (292 aa).

An involved in Mg(2+) ion dislocation from EF-Tu region spans residues 79–82 (TDFV).

It belongs to the EF-Ts family.

The protein resides in the cytoplasm. In terms of biological role, associates with the EF-Tu.GDP complex and induces the exchange of GDP to GTP. It remains bound to the aminoacyl-tRNA.EF-Tu.GTP complex up to the GTP hydrolysis stage on the ribosome. This is Elongation factor Ts from Xylella fastidiosa (strain Temecula1 / ATCC 700964).